A 195-amino-acid chain; its full sequence is Thioredoxin reductase-like selenoprotein T (195 aa).

Positions 1–19 (MRLLLLLLVAASAMVRSEA) are cleaved as a signal peptide. Positions 46 to 49 (CVSU) form a cross-link, cysteinyl-selenocysteine (Cys-Sec). A non-standard amino acid (selenocysteine) is located at residue Sec-49. The helical transmembrane segment at 85-103 (IASFLSVFKLVLIGLIIVG) threads the bilayer.

Belongs to the SelWTH family. Selenoprotein T subfamily. Post-translationally, may contain a selenide-sulfide bond between Cys-46 and Sec-49. This bond is speculated to serve as redox-active pair. Ubiquitous. Highly expressed in the endocrine pancreas.

The protein resides in the endoplasmic reticulum membrane. The enzyme catalyses [thioredoxin]-dithiol + NADP(+) = [thioredoxin]-disulfide + NADPH + H(+). Selenoprotein with thioredoxin reductase-like oxidoreductase activity. Protects dopaminergic neurons against oxidative stress and cell death. Involved in ADCYAP1/PACAP-induced calcium mobilization and neuroendocrine secretion. Plays a role in fibroblast anchorage and redox regulation. In gastric smooth muscle, modulates the contraction processes through the regulation of calcium release and MYLK activation. In pancreatic islets, involved in the control of glucose homeostasis, contributes to prolonged ADCYAP1/PACAP-induced insulin secretion. The protein is Thioredoxin reductase-like selenoprotein T of Homo sapiens (Human).